The following is a 115-amino-acid chain: Nucleoid-associated protein LA_4332 (115 aa).

The protein belongs to the YbaB/EbfC family. Homodimer.

It localises to the cytoplasm. The protein localises to the nucleoid. In terms of biological role, binds to DNA and alters its conformation. May be involved in regulation of gene expression, nucleoid organization and DNA protection. In Leptospira interrogans serogroup Icterohaemorrhagiae serovar Lai (strain 56601), this protein is Nucleoid-associated protein LA_4332.